The sequence spans 510 residues: Maturase K (510 aa).

It belongs to the intron maturase 2 family. MatK subfamily.

The protein resides in the plastid. Its function is as follows. Usually encoded in the trnK tRNA gene intron. Probably assists in splicing its own and other chloroplast group II introns. In Bartsia alpina (Velvet bells), this protein is Maturase K.